A 461-amino-acid polypeptide reads, in one-letter code: tRNA(Ile)-lysidine synthase (461 aa).

Position 26–31 (26–31 (SGGPDS)) interacts with ATP.

It belongs to the tRNA(Ile)-lysidine synthase family.

It localises to the cytoplasm. The catalysed reaction is cytidine(34) in tRNA(Ile2) + L-lysine + ATP = lysidine(34) in tRNA(Ile2) + AMP + diphosphate + H(+). In terms of biological role, ligates lysine onto the cytidine present at position 34 of the AUA codon-specific tRNA(Ile) that contains the anticodon CAU, in an ATP-dependent manner. Cytidine is converted to lysidine, thus changing the amino acid specificity of the tRNA from methionine to isoleucine. The protein is tRNA(Ile)-lysidine synthase of Clostridium acetobutylicum (strain ATCC 824 / DSM 792 / JCM 1419 / IAM 19013 / LMG 5710 / NBRC 13948 / NRRL B-527 / VKM B-1787 / 2291 / W).